A 134-amino-acid polypeptide reads, in one-letter code: Small ribosomal subunit protein uS8c (134 aa).

The protein belongs to the universal ribosomal protein uS8 family. Part of the 30S ribosomal subunit.

Its subcellular location is the plastid. The protein resides in the chloroplast. Functionally, one of the primary rRNA binding proteins, it binds directly to 16S rRNA central domain where it helps coordinate assembly of the platform of the 30S subunit. This Aethionema cordifolium (Lebanon stonecress) protein is Small ribosomal subunit protein uS8c (rps8).